Here is a 77-residue protein sequence, read N- to C-terminus: Tachyplesin-1 (77 aa).

Positions 1–23 are cleaved as a signal peptide; the sequence is MKKLVIALCLMMVLAVMVEEAEA. 2 cysteine pairs are disulfide-bonded: Cys-26–Cys-39 and Cys-30–Cys-35. An Arginine amide modification is found at Arg-40. A propeptide spanning residues 41-77 is cleaved from the precursor; that stretch reads GKRNEVRQYRDRGYDVRAIPEETFFTRQDEDEDDDEE.

Belongs to the tachyplesin/polyphemusin family. Hemocytes.

The protein resides in the secreted. Functionally, significantly inhibits the growth of Gram-negative and Gram-positive bacteria. The polypeptide is Tachyplesin-1 (Tachypleus tridentatus (Japanese horseshoe crab)).